The sequence spans 353 residues: Phosphoribosylformylglycinamidine cyclo-ligase (353 aa).

Belongs to the AIR synthase family.

It localises to the cytoplasm. It catalyses the reaction 2-formamido-N(1)-(5-O-phospho-beta-D-ribosyl)acetamidine + ATP = 5-amino-1-(5-phospho-beta-D-ribosyl)imidazole + ADP + phosphate + H(+). It functions in the pathway purine metabolism; IMP biosynthesis via de novo pathway; 5-amino-1-(5-phospho-D-ribosyl)imidazole from N(2)-formyl-N(1)-(5-phospho-D-ribosyl)glycinamide: step 2/2. The protein is Phosphoribosylformylglycinamidine cyclo-ligase of Methylocella silvestris (strain DSM 15510 / CIP 108128 / LMG 27833 / NCIMB 13906 / BL2).